The following is a 642-amino-acid chain: Conserved oligomeric Golgi complex subunit 6 (642 aa).

This sequence belongs to the COG6 family. As to quaternary structure, component of the conserved oligomeric Golgi complex which is composed of eight different subunits and is required for normal Golgi morphology and localization.

It is found in the golgi apparatus membrane. Its function is as follows. Required for normal Golgi function. This is Conserved oligomeric Golgi complex subunit 6 (cogc-6) from Caenorhabditis elegans.